The chain runs to 181 residues: Protein GrpE (181 aa).

It belongs to the GrpE family. Homodimer.

The protein resides in the cytoplasm. Its function is as follows. Participates actively in the response to hyperosmotic and heat shock by preventing the aggregation of stress-denatured proteins, in association with DnaK and GrpE. It is the nucleotide exchange factor for DnaK and may function as a thermosensor. Unfolded proteins bind initially to DnaJ; upon interaction with the DnaJ-bound protein, DnaK hydrolyzes its bound ATP, resulting in the formation of a stable complex. GrpE releases ADP from DnaK; ATP binding to DnaK triggers the release of the substrate protein, thus completing the reaction cycle. Several rounds of ATP-dependent interactions between DnaJ, DnaK and GrpE are required for fully efficient folding. This Leptothrix cholodnii (strain ATCC 51168 / LMG 8142 / SP-6) (Leptothrix discophora (strain SP-6)) protein is Protein GrpE.